The following is a 132-amino-acid chain: Small ribosomal subunit protein uS8 (132 aa).

This sequence belongs to the universal ribosomal protein uS8 family. As to quaternary structure, part of the 30S ribosomal subunit. Contacts proteins S5 and S12.

One of the primary rRNA binding proteins, it binds directly to 16S rRNA central domain where it helps coordinate assembly of the platform of the 30S subunit. The sequence is that of Small ribosomal subunit protein uS8 from Bifidobacterium adolescentis (strain ATCC 15703 / DSM 20083 / NCTC 11814 / E194a).